The chain runs to 510 residues: Histidine ammonia-lyase (510 aa).

The 5-imidazolinone (Ala-Gly) cross-link spans Ala143–Gly145. At Ser144 the chain carries 2,3-didehydroalanine (Ser).

This sequence belongs to the PAL/histidase family. In terms of processing, contains an active site 4-methylidene-imidazol-5-one (MIO), which is formed autocatalytically by cyclization and dehydration of residues Ala-Ser-Gly.

Its subcellular location is the cytoplasm. It catalyses the reaction L-histidine = trans-urocanate + NH4(+). The protein operates within amino-acid degradation; L-histidine degradation into L-glutamate; N-formimidoyl-L-glutamate from L-histidine: step 1/3. The chain is Histidine ammonia-lyase from Yersinia pestis.